Consider the following 845-residue polypeptide: Protein SEY1 (845 aa).

Residues M1–L29 adopt a coiled-coil conformation. Topologically, residues M1–Q749 are cytoplasmic. One can recognise a GB1/RHD3-type G domain in the interval G112–Y334. G122–S129 contacts GTP. A helical transmembrane segment spans residues V750–L770. The Lumenal segment spans residues S771–P773. Residues V774–L794 form a helical membrane-spanning segment. At S795 to N845 the chain is on the cytoplasmic side. Residues Q823–N845 form a disordered region. The segment covering R826–E838 has biased composition (basic and acidic residues).

The protein belongs to the TRAFAC class dynamin-like GTPase superfamily. GB1/RHD3 GTPase family. RHD3 subfamily.

It is found in the endoplasmic reticulum membrane. Its function is as follows. Cooperates with the reticulon proteins and tubule-shaping DP1 family proteins to generate and maintain the structure of the tubular endoplasmic reticulum network. Has GTPase activity, which is required for its function in ER organization. This chain is Protein SEY1, found in Mycosarcoma maydis (Corn smut fungus).